The sequence spans 668 residues: Phosphoglycerate transport system sensor protein PgtB (668 aa).

2 consecutive transmembrane segments (helical) span residues Gly20–Trp40 and Leu342–Ile362. Residues Ser364–Arg416 enclose the HAMP domain. The Histidine kinase domain occupies Thr454–Asp663. At His457 the chain carries Phosphohistidine; by autocatalysis.

Its subcellular location is the cell inner membrane. The catalysed reaction is ATP + protein L-histidine = ADP + protein N-phospho-L-histidine.. Member of the two-component regulatory system PgtB/PgtA that regulates the inducible phosphoglycerate transport system. Activates PgtA by phosphorylation. The polypeptide is Phosphoglycerate transport system sensor protein PgtB (pgtB) (Salmonella typhimurium (strain LT2 / SGSC1412 / ATCC 700720)).